The sequence spans 481 residues: Sucrose phosphorylase (481 aa).

Sucrose is bound by residues Asp49, His87, 191-193, Glu234, 291-292, 335-338, and Arg392; these read RLD, HD, and DIYQ. Residue Asp193 is the Nucleophile of the active site. Glu234 (proton donor) is an active-site residue.

It belongs to the glycosyl hydrolase 13 family. Sucrose phosphorylase subfamily.

It is found in the cytoplasm. It catalyses the reaction sucrose + phosphate = D-fructose + alpha-D-glucose 1-phosphate. Functionally, intracellular catabolism of sucrose. Being intracellular, probably not involved in synthesis of extracellular polysaccharides. The chain is Sucrose phosphorylase from Streptococcus mutans serotype c (strain ATCC 700610 / UA159).